The following is a 668-amino-acid chain: Chitin synthase 8 (668 aa).

Residues 1–26 (MTSRMPTSGHRTSSSSSERGNMSVQQ) are compositionally biased toward polar residues. Positions 1–62 (MTSRMPTSGH…PAPLRPGWTL (62 aa)) are disordered. N-linked (GlcNAc...) asparagine glycans are attached at residues N21, N98, and N101. 2 helical membrane passes run 136–156 (WSLIIGLAGINGALIYIGWKY) and 162–182 (FFLVLLSSNTVLQSFMCICII). N-linked (GlcNAc...) asparagine glycosylation is found at N216 and N476. The next 4 membrane-spanning stretches (helical) occupy residues 522 to 542 (WALGSISNEFVMIFRPGIILI), 548 to 568 (LIAVITWAITPFIIAAFVELL), 583 to 603 (VFLGLICVLFFRYLYSFCIGF), and 615 to 635 (YFAGYVMHLFTSPFMNIIILV).

It belongs to the chitin synthase family. Class VIII subfamily.

The protein localises to the cell membrane. It localises to the cell septum. It catalyses the reaction [(1-&gt;4)-N-acetyl-beta-D-glucosaminyl](n) + UDP-N-acetyl-alpha-D-glucosamine = [(1-&gt;4)-N-acetyl-beta-D-glucosaminyl](n+1) + UDP + H(+). Its function is as follows. Polymerizes chitin, a structural polymer of the cell wall and septum, by transferring the sugar moiety of UDP-GlcNAc to the non-reducing end of the growing chitin polymer. Participated in the development of cell wall and plays a critical role in fungal response to environmental stresses. Necessary for pathogenicity and deoxinivalenol (DON) production. The sequence is that of Chitin synthase 8 from Gibberella zeae (strain ATCC MYA-4620 / CBS 123657 / FGSC 9075 / NRRL 31084 / PH-1) (Wheat head blight fungus).